The following is a 239-amino-acid chain: Phospholipase A2 (239 aa).

The first 19 residues, 1–19, serve as a signal peptide directing secretion; that stretch reads MSLIIVLVISVLSADAVLS. A propeptide spanning residues 20–105 is cleaved from the precursor; sequence MDNELYLNLE…GRCLSVGESE (86 aa). The Ca(2+) site is built by Trp-113, Gly-115, and Gly-117. Intrachain disulfides connect Cys-114–Cys-136, Cys-135–Cys-174, Cys-142–Cys-167, Cys-165–Cys-202, and Cys-207–Cys-217. His-139 is a catalytic residue. A Ca(2+)-binding site is contributed by Asp-140. A propeptide spanning residues 211–213 is cleaved from the precursor; it reads RSP.

Belongs to the phospholipase A2 family. Group III subfamily. In terms of assembly, heterodimer composed of a small subunit and a large subunit; disulfid-linked. The cofactor is Ca(2+). Expressed by the venom gland.

It localises to the secreted. It carries out the reaction a 1,2-diacyl-sn-glycero-3-phosphocholine + H2O = a 1-acyl-sn-glycero-3-phosphocholine + a fatty acid + H(+). In terms of biological role, toxic phospholipase A2, which may catalyze the calcium-dependent hydrolysis of the 2-acyl groups in 3-sn-phosphoglycerides. Inhibits both skeletal (RYR1) and cardiac (RYR2) ryanodine receptors (calcium release channels). Probably blocks ryanodine receptors by generating a lipid product. The chain is Phospholipase A2 from Hoffmannihadrurus gertschi (Scorpion).